The primary structure comprises 527 residues: Tyrosine-protein kinase TXK (527 aa).

Positions D35–E79 are disordered. Positions S51–V64 are enriched in polar residues. The Nuclear localization signal motif lies at K68 to P73. One can recognise an SH3 domain in the interval E82–I142. Phosphotyrosine; by autocatalysis is present on Y91. In terms of domain architecture, SH2 spans W150 to V246. One can recognise a Protein kinase domain in the interval L271–W527. Residues I277–V285 and K299 each bind ATP. The Proton acceptor role is filled by D390. Phosphotyrosine; by FYN and autocatalysis is present on Y420.

Belongs to the protein kinase superfamily. Tyr protein kinase family. TEC subfamily. In terms of assembly, interacts with PARP1 and EEF1A1. Interacts with SH2D2A. Interacts with FYN. Post-translationally, phosphorylated at Tyr-420 by FYN. Autophosphorylation at Tyr-91 is critical for the activation of TXK, leading to the up-regulation of IFN-gamma gene transcription. The cysteine string at the N-terminus is palmitoylated and required for the proper subcellular location. Expressed in T-cells and some myeloid cell lines. Expressed in Th1/Th0 cells with IFN-gamma-producing potential.

The protein localises to the cytoplasm. It is found in the nucleus. Its subcellular location is the cell membrane. It carries out the reaction L-tyrosyl-[protein] + ATP = O-phospho-L-tyrosyl-[protein] + ADP + H(+). Activated by phosphorylation by FYN. In terms of biological role, non-receptor tyrosine kinase that plays a redundant role with ITK in regulation of the adaptive immune response. Regulates the development, function and differentiation of conventional T-cells and nonconventional NKT-cells. When antigen presenting cells (APC) activate T-cell receptor (TCR), a series of phosphorylation leads to the recruitment of TXK to the cell membrane, where it is phosphorylated at Tyr-420. Phosphorylation leads to TXK full activation. Also contributes to signaling from many receptors and participates in multiple downstream pathways, including regulation of the actin cytoskeleton. Like ITK, can phosphorylate PLCG1, leading to its localization in lipid rafts and activation, followed by subsequent cleavage of its substrates. In turn, the endoplasmic reticulum releases calcium in the cytoplasm and the nuclear activator of activated T-cells (NFAT) translocates into the nucleus to perform its transcriptional duty. Plays a role in the positive regulation of IFNG transcription in T-helper 1 cells as part of an IFNG promoter-binding complex with PARP1 and EEF1A1. Within the complex, phosphorylates both PARP1 and EEF1A1. Also phosphorylates key sites in LCP2 leading to the up-regulation of Th1 preferred cytokine IL-2. Phosphorylates 'Tyr-201' of CTLA4 which leads to the association of PI-3 kinase with the CTLA4 receptor. The sequence is that of Tyrosine-protein kinase TXK (TXK) from Homo sapiens (Human).